The sequence spans 391 residues: Inner membrane protein YdcO (391 aa).

At methionine 1 to proline 9 the chain is on the cytoplasmic side. The helical transmembrane segment at threonine 10–tryptophan 30 threads the bilayer. Residues glutamine 31–glutamine 42 lie on the Periplasmic side of the membrane. The chain crosses the membrane as a helical span at residues isoleucine 43–leucine 63. Residues tryptophan 64 to alanine 93 lie on the Cytoplasmic side of the membrane. A helical membrane pass occupies residues isoleucine 94–alanine 114. At arginine 115–serine 123 the chain is on the periplasmic side. Residues leucine 124–leucine 144 form a helical membrane-spanning segment. Topologically, residues aspartate 145–arginine 167 are cytoplasmic. A helical transmembrane segment spans residues tyrosine 168–valine 188. At threonine 189 to threonine 200 the chain is on the periplasmic side. The helical transmembrane segment at tyrosine 201 to valine 221 threads the bilayer. Residues threonine 222 to leucine 246 lie on the Cytoplasmic side of the membrane. Residues isoleucine 247–isoleucine 267 traverse the membrane as a helical segment. The Periplasmic portion of the chain corresponds to alanine 268–arginine 287. The helical transmembrane segment at tryptophan 288–isoleucine 308 threads the bilayer. Topologically, residues threonine 309–methionine 311 are cytoplasmic. A helical membrane pass occupies residues methionine 312–isoleucine 332. At glycine 333–threonine 361 the chain is on the periplasmic side. Residues leucine 362 to leucine 382 traverse the membrane as a helical segment. Topologically, residues asparagine 383–tyrosine 391 are cytoplasmic.

It localises to the cell inner membrane. In Escherichia coli (strain K12), this protein is Inner membrane protein YdcO (ydcO).